Reading from the N-terminus, the 85-residue chain is uncharacterized protein (85 aa).

2 consecutive transmembrane segments (helical) span residues 20-42 (IYWFFCLYYKDGPILYTIYTTFL) and 52-69 (IILRNTVAFLSFMYKHYY).

The protein resides in the membrane. This is an uncharacterized protein from Saccharomyces cerevisiae (strain ATCC 204508 / S288c) (Baker's yeast).